Consider the following 390-residue polypeptide: Succinate--CoA ligase [ADP-forming] subunit beta (390 aa).

The region spanning 9–245 (KHLLKKYNIP…TTQEDEHETM (237 aa)) is the ATP-grasp domain. ATP contacts are provided by residues lysine 46, 53-55 (GRG), glutamate 99, serine 102, and glutamate 107. Mg(2+) is bound by residues asparagine 200 and aspartate 214. Residues asparagine 265 and 322–324 (GIV) each bind substrate.

It belongs to the succinate/malate CoA ligase beta subunit family. In terms of assembly, heterotetramer of two alpha and two beta subunits. The cofactor is Mg(2+).

It catalyses the reaction succinate + ATP + CoA = succinyl-CoA + ADP + phosphate. The enzyme catalyses GTP + succinate + CoA = succinyl-CoA + GDP + phosphate. The protein operates within carbohydrate metabolism; tricarboxylic acid cycle; succinate from succinyl-CoA (ligase route): step 1/1. Functionally, succinyl-CoA synthetase functions in the citric acid cycle (TCA), coupling the hydrolysis of succinyl-CoA to the synthesis of either ATP or GTP and thus represents the only step of substrate-level phosphorylation in the TCA. The beta subunit provides nucleotide specificity of the enzyme and binds the substrate succinate, while the binding sites for coenzyme A and phosphate are found in the alpha subunit. This is Succinate--CoA ligase [ADP-forming] subunit beta from Coxiella burnetii (strain CbuK_Q154) (Coxiella burnetii (strain Q154)).